Reading from the N-terminus, the 558-residue chain is Glucose-6-phosphate isomerase (558 aa).

An N6-acetyllysine modification is found at Lys-12. Phosphoserine is present on residues Ser-86 and Ser-107. An N6-acetyllysine modification is found at Lys-142. A D-glucose 6-phosphate-binding site is contributed by 159-160 (GS). Ser-185 bears the Phosphoserine; by CK2 mark. Position 210–215 (210–215 (SKTFTT)) interacts with D-glucose 6-phosphate. Thr-250 carries the phosphothreonine modification. Gln-354, Glu-358, and His-389 together coordinate D-glucose 6-phosphate. Glu-358 (proton donor) is an active-site residue. His-389 is an active-site residue. Lys-454 carries the N6-acetyllysine; alternate modification. Lys-454 is modified (N6-malonyllysine; alternate). Position 454 is an N6-succinyllysine; alternate (Lys-454). Ser-455 carries the phosphoserine modification. Lys-519 contributes to the D-glucose 6-phosphate binding site. Lys-519 is an active-site residue.

The protein belongs to the GPI family. As to quaternary structure, homodimer; in the catalytically active form. Monomer in the secreted form. Post-translationally, phosphorylation at Ser-185 by CK2 has been shown to decrease enzymatic activity and may contribute to secretion by a non-classical secretory pathway. ISGylated.

The protein resides in the cytoplasm. It localises to the secreted. The enzyme catalyses alpha-D-glucose 6-phosphate = beta-D-fructose 6-phosphate. The protein operates within carbohydrate degradation; glycolysis; D-glyceraldehyde 3-phosphate and glycerone phosphate from D-glucose: step 2/4. Functionally, in the cytoplasm, catalyzes the conversion of glucose-6-phosphate to fructose-6-phosphate, the second step in glycolysis, and the reverse reaction during gluconeogenesis. Besides it's role as a glycolytic enzyme, also acts as a secreted cytokine: acts as an angiogenic factor (AMF) that stimulates endothelial cell motility. Acts as a neurotrophic factor, neuroleukin, for spinal and sensory neurons. It is secreted by lectin-stimulated T-cells and induces immunoglobulin secretion. This is Glucose-6-phosphate isomerase from Cricetulus griseus (Chinese hamster).